Consider the following 877-residue polypeptide: SRP-independent targeting protein 1 (877 aa).

Phosphoserine occurs at positions 309, 310, 311, 332, and 334. Disordered regions lie at residues 369–414, 446–521, and 550–579; these read LRKQ…PSND, DDYT…DVLS, and KPFN…SNHF. Positions 389–402 are enriched in low complexity; that stretch reads RSQSYSSSNMSRSP. Positions 412–441 form a coiled coil; it reads SNDELVYDELNNQINEVQDRAKNEEIVLYN. Positions 447–462 are enriched in basic and acidic residues; that stretch reads DYTKERGEQEQDRTSY. The segment covering 470–501 has biased composition (acidic residues); that stretch reads YDDEEGGNEDNYDDDEDDDDDDDDDDESDDEG. Polar residues-rich tracts occupy residues 510 to 521 and 551 to 579; these read LSRSGSSTDVLS and PFNQ…SNHF. Glycyl lysine isopeptide (Lys-Gly) (interchain with G-Cter in ubiquitin) cross-links involve residues lysine 668 and lysine 670. 3 positions are modified to phosphoserine: serine 692, serine 694, and serine 706. Residues 773-815 are disordered; the sequence is SLPKEREDDNDSTNSTIVPNHPDNDNYNDNDNDNNTGINSNNF. Low complexity predominate over residues 805-815; the sequence is DNNTGINSNNF. Residue serine 841 is modified to Phosphoserine.

Interacts with ENV10/SND2.

The protein resides in the cytoplasm. Functions in the SND pathway, a SRP (signal recognition particle) and GET (guided entry of tail-anchored proteins) independent pathway for targeting a broad range of substrate proteins to the endoplasmic reticulum. SND functions in parallel to GET in targeting proteins with downstream hydrophobic motifs. The sequence is that of SRP-independent targeting protein 1 from Saccharomyces cerevisiae (strain ATCC 204508 / S288c) (Baker's yeast).